The following is a 327-amino-acid chain: ATPase ASNA1 homolog (327 aa).

26–33 provides a ligand contact to ATP; the sequence is KGGVGKTT. The active site involves D57. The ATP site is built by E238 and N265. Zn(2+) contacts are provided by C274 and C277.

This sequence belongs to the arsA ATPase family. As to quaternary structure, homodimer.

The protein resides in the cytoplasm. It is found in the endoplasmic reticulum. Functionally, ATPase required for the post-translational delivery of tail-anchored (TA) proteins to the endoplasmic reticulum. Recognizes and selectively binds the transmembrane domain of TA proteins in the cytosol. This complex then targets to the endoplasmic reticulum by membrane-bound receptors, where the tail-anchored protein is released for insertion. This process is regulated by ATP binding and hydrolysis. ATP binding drives the homodimer towards the closed dimer state, facilitating recognition of newly synthesized TA membrane proteins. ATP hydrolysis is required for insertion. Subsequently, the homodimer reverts towards the open dimer state, lowering its affinity for the membrane-bound receptor, and returning it to the cytosol to initiate a new round of targeting. This Entamoeba histolytica (strain ATCC 30459 / HM-1:IMSS / ABRM) protein is ATPase ASNA1 homolog.